We begin with the raw amino-acid sequence, 91 residues long: Ixochymostatin (91 aa).

The first 20 residues, 1-20 (MKTYVLQALLLTLAVAVVRA), serve as a signal peptide directing secretion. Intrachain disulfides connect cysteine 34-cysteine 70, cysteine 43-cysteine 66, cysteine 48-cysteine 62, cysteine 53-cysteine 90, and cysteine 72-cysteine 84. The TIL domain maps to 34–90 (CAEGETWKECVGSSCAELTCEHPEPSLGCTYDCNYGCYCAPDFFRNANKECVKKDKC).

The protein belongs to the serine protease inhibitor-like (TIL domain-containing) family. As to expression, salivary gland. Midgut.

The protein resides in the secreted. Tight-binding competitive inhibitor of chymotrypsin-like proteases; inhibits host chymase, cathepsin G (CTSG) and chymotrypsin. Inhibits chymase-mediated generation of vasoconstrictor peptides: angiotensin II and endothelin I. Reduces chymase-mediated vascular permeability and vascular endothelial-cadherin degradation. The chain is Ixochymostatin from Ixodes scapularis (Black-legged tick).